Here is a 275-residue protein sequence, read N- to C-terminus: Elongation factor Ts (275 aa).

Residues 76–79 form an involved in Mg(2+) ion dislocation from EF-Tu region; it reads TDFV.

It belongs to the EF-Ts family.

The protein resides in the cytoplasm. In terms of biological role, associates with the EF-Tu.GDP complex and induces the exchange of GDP to GTP. It remains bound to the aminoacyl-tRNA.EF-Tu.GTP complex up to the GTP hydrolysis stage on the ribosome. The sequence is that of Elongation factor Ts from Nocardia farcinica (strain IFM 10152).